An 886-amino-acid chain; its full sequence is Translation initiation factor IF-2 (886 aa).

Disordered stretches follow at residues 1 to 25, 50 to 229, and 253 to 272; these read MSETKNPGDHTLSVSPTKTLSLKRP, RRAL…PAEE, and KGAEQKSRGRLTVASATGDE. Positions 50–60 are enriched in basic and acidic residues; that stretch reads RRALGEPHVLR. Residues 63–73 are compositionally biased toward low complexity; it reads APALDVVAPAP. Positions 74–83 are enriched in pro residues; sequence QAAPPAPTQQ. Low complexity predominate over residues 84-106; that stretch reads PQPRVASRPQPQQRSSSGVILRS. The segment covering 107–181 has biased composition (basic and acidic residues); that stretch reads LTEEEREARS…KRRSESEAKR (75 aa). The segment covering 185–225 has biased composition (low complexity); sequence GGEPAPAGANAAPRKAPALSAAPGSAAPSGQPGPAGAVGAR. The tr-type G domain occupies 383 to 553; sequence SRPPVVTIMG…ALQAELLDLK (171 aa). Residues 392–399 are G1; it reads GHVDHGKT. Residue 392–399 participates in GTP binding; the sequence is GHVDHGKT. Residues 417–421 are G2; that stretch reads GITQH. The tract at residues 439 to 442 is G3; it reads DTPG. GTP is bound by residues 439-443 and 493-496; these read DTPGH and NKID. Residues 493-496 form a G4 region; that stretch reads NKID. The interval 529–531 is G5; that stretch reads SAT.

It belongs to the TRAFAC class translation factor GTPase superfamily. Classic translation factor GTPase family. IF-2 subfamily.

The protein resides in the cytoplasm. Functionally, one of the essential components for the initiation of protein synthesis. Protects formylmethionyl-tRNA from spontaneous hydrolysis and promotes its binding to the 30S ribosomal subunits. Also involved in the hydrolysis of GTP during the formation of the 70S ribosomal complex. This is Translation initiation factor IF-2 from Methylocella silvestris (strain DSM 15510 / CIP 108128 / LMG 27833 / NCIMB 13906 / BL2).